The chain runs to 153 residues: Aminoglycoside N(6')-acetyltransferase type 1 (153 aa).

Residues 6 to 153 (PTIRQATPAD…YFRMPLEPSA (148 aa)) form the N-acetyltransferase domain. 5 residues coordinate substrate: Trp-27, Tyr-70, Glu-83, Asp-119, and Glu-140.

As to quaternary structure, homodimer.

The enzyme catalyses kanamycin B + acetyl-CoA = N(6')-acetylkanamycin B + CoA + H(+). Catalyzes the transfer of an acetyl group from acetyl-CoA to the 6'-amino group of aminoglycoside molecules conferring resistance to antibiotics containing the purpurosamine ring including amikacin, gentamicin, kanamycin B, tobramycin, netilmicin, and isepamicin. This Stenotrophomonas maltophilia (Pseudomonas maltophilia) protein is Aminoglycoside N(6')-acetyltransferase type 1.